The chain runs to 307 residues: Ornithine carbamoyltransferase (307 aa).

Carbamoyl phosphate-binding positions include 53-56, Gln-80, Arg-104, and 131-134; these read STRT and HPCQ. L-ornithine contacts are provided by residues Asn-162, Asp-219, and 223–224; that span reads SM. Carbamoyl phosphate-binding positions include 259–260 and Arg-287; that span reads CL.

Belongs to the aspartate/ornithine carbamoyltransferase superfamily. OTCase family.

The protein localises to the cytoplasm. The enzyme catalyses carbamoyl phosphate + L-ornithine = L-citrulline + phosphate + H(+). Its pathway is amino-acid biosynthesis; L-arginine biosynthesis; L-arginine from L-ornithine and carbamoyl phosphate: step 1/3. In terms of biological role, reversibly catalyzes the transfer of the carbamoyl group from carbamoyl phosphate (CP) to the N(epsilon) atom of ornithine (ORN) to produce L-citrulline. The protein is Ornithine carbamoyltransferase of Psychrobacter arcticus (strain DSM 17307 / VKM B-2377 / 273-4).